The sequence spans 644 residues: Zinc transporter ZIP4 (644 aa).

The first 27 residues, 1-27, serve as a signal peptide directing secretion; the sequence is MAILAWLEPRPLLAVLVLVLTMRMAQP. The Extracellular portion of the chain corresponds to 28 to 323; the sequence is AHLLTLLSSG…QNQLSQAEKY (296 aa). Intrachain disulfides connect C59/C64, C67/C103, and C153/C188. The interval 231–259 is disordered; the sequence is TETHSDHHHQEKRVNRQGPTPLTAPNSSS. Residues 233–244 are compositionally biased toward basic and acidic residues; it reads THSDHHHQEKRV. Residues 247-259 are compositionally biased toward polar residues; the sequence is QGPTPLTAPNSSS. C266 and C305 form a disulfide bridge. A helical membrane pass occupies residues 324-344; the sequence is LYGSLATLLICLCSTFGLLLL. Topologically, residues 345 to 355 are cytoplasmic; sequence TCAACSTAAHY. Residues 356–376 traverse the membrane as a helical segment; that stretch reads VIQTFLGMAVGALTGDALLHL. Residues 377-404 are Extracellular-facing; the sequence is TPKVLGLHQHGGDSEHRADSHGPQTTWR. The helical transmembrane segment at 405-425 threads the bilayer; the sequence is LVVALSGLYVFFLFEKLCDLL. At 426 to 495 the chain is on the cytoplasmic side; that stretch reads LPQDPEDRKG…KSPELRLLPY (70 aa). An Essential for SLC39A4 endocytosis motif is present at residues 449–451; sequence LQL. The segment covering 456–467 has biased composition (basic and acidic residues); it reads LRPPKQPHEGSR. The disordered stretch occupies residues 456 to 484; that stretch reads LRPPKQPHEGSRADLVAEESPELLSPEPR. Residues 496–515 traverse the membrane as a helical segment; it reads MITLGDGLHNFADGLAVGAA. Zn(2+)-binding residues include H504, N505, and D508. Residues 516–523 are Extracellular-facing; it reads FASSWKTG. The helical transmembrane segment at 524 to 550 threads the bilayer; sequence LATSLAVFCHEVPHELGDFAALLHAGL. Residues H533, E534, and H537 each contribute to the Zn(2+) site. Over 551–555 the chain is Cytoplasmic; the sequence is PVSRA. A helical membrane pass occupies residues 556–576; it reads LLLNLASGLTAFAGLYVALAL. Topologically, residues 577 to 583 are extracellular; it reads GVGEESE. A helical transmembrane segment spans residues 584 to 604; it reads SWTLAVAIGLFLYVALCDMLP. The Cytoplasmic segment spans residues 605 to 614; sequence AMLNVRDPRP. Residues 615 to 635 form a helical membrane-spanning segment; the sequence is WLLFLLHNVGLLGGWAVLLLL. Topologically, residues 636-644 are extracellular; it reads SLYEDSIAL.

This sequence belongs to the ZIP transporter (TC 2.A.5) family. Homodimer. Post-translationally, the extracellular N-terminal ectodomain is cleaved when cells are Zn(2+) deficient, N-terminally cleaved SLC39A4 is internalized at a faster rate. Under excess Zn(2+) conditions, SLC39A4 on the cell surface is rapidly endocytosed, ubiquitinated and degraded. In terms of processing, glycosylated.

It localises to the cell membrane. Its subcellular location is the recycling endosome membrane. The protein resides in the apical cell membrane. It carries out the reaction Zn(2+)(in) = Zn(2+)(out). In terms of biological role, selective transporter that mediates the uptake of Zn(2+). Plays an essential role for dietary zinc uptake from small intestine. The Zn(2+) uniporter activity is regulated by zinc availability. Also exhibits polyspecific binding and transport of Cu(2+), Cd(2+) and possibly Ni(2+) but at higher concentrations. In Pteropus alecto (Black flying fox), this protein is Zinc transporter ZIP4.